The chain runs to 372 residues: Queuine tRNA-ribosyltransferase (372 aa).

Residue Asp-92 is the Proton acceptor of the active site. Residues 92–96 (DSGGY), Asp-146, Gln-188, and Gly-215 each bind substrate. Residues 246-252 (GIGSLKE) form an RNA binding region. Asp-265 functions as the Nucleophile in the catalytic mechanism. The interval 270–274 (TRLGR) is RNA binding; important for wobble base 34 recognition. Positions 303, 305, 308, and 334 each coordinate Zn(2+).

It belongs to the queuine tRNA-ribosyltransferase family. In terms of assembly, homodimer. Within each dimer, one monomer is responsible for RNA recognition and catalysis, while the other monomer binds to the replacement base PreQ1. It depends on Zn(2+) as a cofactor.

It catalyses the reaction 7-aminomethyl-7-carbaguanine + guanosine(34) in tRNA = 7-aminomethyl-7-carbaguanosine(34) in tRNA + guanine. The protein operates within tRNA modification; tRNA-queuosine biosynthesis. Its function is as follows. Catalyzes the base-exchange of a guanine (G) residue with the queuine precursor 7-aminomethyl-7-deazaguanine (PreQ1) at position 34 (anticodon wobble position) in tRNAs with GU(N) anticodons (tRNA-Asp, -Asn, -His and -Tyr). Catalysis occurs through a double-displacement mechanism. The nucleophile active site attacks the C1' of nucleotide 34 to detach the guanine base from the RNA, forming a covalent enzyme-RNA intermediate. The proton acceptor active site deprotonates the incoming PreQ1, allowing a nucleophilic attack on the C1' of the ribose to form the product. After dissociation, two additional enzymatic reactions on the tRNA convert PreQ1 to queuine (Q), resulting in the hypermodified nucleoside queuosine (7-(((4,5-cis-dihydroxy-2-cyclopenten-1-yl)amino)methyl)-7-deazaguanosine). In Prochlorococcus marinus (strain AS9601), this protein is Queuine tRNA-ribosyltransferase.